The sequence spans 629 residues: MAPSKARSSPAVERRDRLTLAKLASYDDVATDALVDRAYFWTNTRKNRTKYIPVRGIMDDKVAEILLHHVIVAKDTVKAERELLAISGIKKYMAKLPSDREKEWFRRHLRKYIQMYLPDCPFEVTTTNRYTITEHEAAICARKFIKQGQEIKYLSGTLVPMTREEEQDLDLKRKDFSIVMSSRRKTPSFFLGPARFANHDCDANGRLVTRGSEGMQVVATRDIEIGEEITVSYGEDYFGIDNCECLCLTCERAVRNGWAPQVDSEASSTASTPALNDETKSAHGSTSPQKRKYAPDADSDASASPTPQKRRKFSRQYSKLRTEVSLSGDVTAIEPDPEQNTKIAVETTTDVPKDKPATNGVTENESNARVSENQRATSDREPSSPLGVDESQNSSASTAPTSLFDVGIKLEESTEAFTQETLTTTKAGSVADSHGDGDCRQLTAGIEQEALSELSESLELDDKSGTVVKRRKRRTRRQVVPSVEDESHRVRVPGDYTKTSKLLAQSYDRWVECRTCKTWFLQHNSYLTRRECPRCERHSMLYGFQWPKTDKDGPLDDEERVMDHRTVHRFLYPEEEARISRRDRGVSFGVTPTPELSEPRTETEDSEACDERRNTRASRRRTQSLRMTM.

An SET domain is found at 120–234; sequence CPFEVTTTNR…IGEEITVSYG (115 aa). Polar residues-rich tracts occupy residues 264–274, 338–350, 359–376, and 390–400; these read SEASSTASTPA, EQNTKIAVETTTD, NGVTENESNARVSENQRA, and ESQNSSASTAP. Disordered stretches follow at residues 264–400 and 586–629; these read SEAS…STAP and VSFG…RMTM. A compositionally biased stretch (basic and acidic residues) spans 597–614; that stretch reads SEPRTETEDSEACDERRN.

This sequence belongs to the class V-like SAM-binding methyltransferase superfamily. Histone-lysine methyltransferase family. Suvar4-20 subfamily.

The protein resides in the nucleus. Its subcellular location is the chromosome. The enzyme catalyses L-lysyl(20)-[histone H4] + 3 S-adenosyl-L-methionine = N(6),N(6),N(6)-trimethyl-L-lysyl(20)-[histone H4] + 3 S-adenosyl-L-homocysteine + 3 H(+). Functionally, histone methyltransferase that trimethylates 'Lys-20' of histone H4 to form H4K20me3. In Aspergillus terreus (strain NIH 2624 / FGSC A1156), this protein is Histone-lysine N-methyltransferase set9 (set9).